Here is a 190-residue protein sequence, read N- to C-terminus: Cathelicidin-3 (190 aa).

A signal peptide spans 1–29 (METQMASPSLGRCSLWLLLLGLLLPSASA). Pyrrolidone carboxylic acid is present on Q30. Positions 30–130 (QALSYREAVL…DLNCNELQSV (101 aa)) are excised as a propeptide. Cystine bridges form between C85/C96 and C107/C124. Residues 133–151 (LRPRRPRLPRPRPRPRPRP) show a composition bias toward basic residues. The segment at 133–190 (LRPRRPRLPRPRPRPRPRPRSLPLPRPQPRRIPRPILLPWRPPRPIPRPQPQPIPRWL) is disordered. Over residues 172–190 (WRPPRPIPRPQPQPIPRWL) the composition is skewed to pro residues.

It belongs to the cathelicidin family.

It is found in the secreted. Exerts, in vitro, a potent antimicrobial activity. Probably due to an impairment of the function of the respiratory chain and of energy-dependent activities in the inner membrane of susceptible microorganisms. The polypeptide is Cathelicidin-3 (CATHL3) (Ovis aries (Sheep)).